A 508-amino-acid polypeptide reads, in one-letter code: Maturase K (508 aa).

The protein belongs to the intron maturase 2 family. MatK subfamily.

The protein resides in the plastid. It is found in the chloroplast. Its function is as follows. Usually encoded in the trnK tRNA gene intron. Probably assists in splicing its own and other chloroplast group II introns. This Wolffia arrhiza (Rootless water-meal) protein is Maturase K.